We begin with the raw amino-acid sequence, 422 residues long: Zinc finger and BTB domain-containing protein 42 (422 aa).

The BTB domain maps to 24 to 92; that stretch reads CDCTVLVGDA…MYEGRLDLRS (69 aa). Disordered regions lie at residues 121–141, 166–188, and 207–256; these read KDRSLDPGNPAPGAEPAQPPC, AALPPRASGPPPCQVPEESDQAL, and LQTP…AAKG. A compositionally biased stretch (pro residues) spans 243–252; it reads HSPPKPPPVP. 4 consecutive C2H2-type zinc fingers follow at residues 294 to 316, 334 to 356, 362 to 384, and 390 to 413; these read CICPLCSKLFPSSHVLQLHLSAH, PTCPLCGKTFSCTYTLKRHERTH, YTCVQCGKSFQYSHNLSRHTVVH, and HACRWCERRFTQSGDLYRHVRKFH.

It belongs to the krueppel C2H2-type zinc-finger protein family. ZBTB18 subfamily. In terms of tissue distribution, expressed in skeletal muscle (at protein level).

It localises to the cytoplasm. The protein resides in the nucleus. It is found in the nucleoplasm. Its function is as follows. Transcriptional repressor. Specifically binds DNA and probably acts by recruiting chromatin remodeling multiprotein complexes. This Homo sapiens (Human) protein is Zinc finger and BTB domain-containing protein 42 (ZBTB42).